The primary structure comprises 394 residues: NAC domain-containing protein 26 (394 aa).

The NAC domain occupies 7-156 (VPPGFRFHPT…GWVVCRVFKK (150 aa)). Residues 107 to 162 (IGMRKTLVFYKGRAPNGQKSDWIMHEYRLETSENGTPQEEGWVVCRVFKKKLAATV) mediate DNA binding.

Belongs to the plant vascular related NAC-domain protein family. As to quaternary structure, interacts with NAC083/VNI2. Detected in root vessels of protoxylems, outermost metaxylems, inner metaxylems, shoots and hypocotyls. Expressed in roots, hypocotyls, cotyledons and leaves. Expressed in developing xylems. Specifically expressed in vessels in the secondary xylem of the root-hypocotyl region, and in vessels but not in interfascicular fibers in stems.

The protein resides in the nucleus. Functionally, transcription activator that binds to the secondary wall NAC binding element (SNBE), 5'-(T/A)NN(C/T)(T/C/G)TNNNNNNNA(A/C)GN(A/C/T)(A/T)-3', in the promoter of target genes. Involved in xylem formation by promoting the expression of secondary wall-associated transcription factors and of genes involved in secondary wall biosynthesis and programmed cell death, genes driven by the secondary wall NAC binding element (SNBE). Triggers thickening of secondary walls. In Arabidopsis thaliana (Mouse-ear cress), this protein is NAC domain-containing protein 26.